Here is a 543-residue protein sequence, read N- to C-terminus: Small conductance calcium-activated potassium channel protein 1 (543 aa).

Residues 1 to 92 (MNSHSYNGSV…SGKPSNVGHR (92 aa)) are disordered. A compositionally biased stretch (acidic residues) spans 65–76 (DQDDDEDDEEDE). A helical membrane pass occupies residues 111 to 131 (LIFGMFGIVVMVTETELSWGV). A helical membrane pass occupies residues 140 to 160 (FALKCLISLSTAILLGLVVLY). A helical transmembrane segment spans residues 179-199 (IAMTCERVFLISLELAVCAIH). A helical membrane pass occupies residues 228–248 (VLLSIPMFLRLYLLGRVMLLH). Residues 277 to 297 (LMTICPGTVLLVFSISSWIIA) form a helical membrane-spanning segment. The segment at residues 317 to 337 (FLGAMWLISITFLSIGYGDMV) is an intramembrane region (pore-forming). A helical transmembrane segment spans residues 346–366 (VCLLTGIMGAGCTALVVAVVA). The calmodulin-binding stretch occupies residues 384–463 (DTQLTKRVKN…LTDLAKTQTV (80 aa)). The segment at 505–543 (QAIRPPPPPLPPRPGPGPQDQAARSSPCRWTPVAPSDCG) is disordered. Over residues 508 to 521 (RPPPPPLPPRPGPG) the composition is skewed to pro residues.

This sequence belongs to the potassium channel KCNN family. KCa2.1/KCNN1 subfamily. As to quaternary structure, homodimer. Heteromultimer with KCNN2 and KCNN3. The complex is composed of 4 channel subunits each of which binds to a calmodulin subunit which regulates the channel activity through calcium-binding. Interacts with calmodulin.

The protein resides in the membrane. Its subcellular location is the cytoplasm. The protein localises to the myofibril. It is found in the sarcomere. It localises to the z line. It carries out the reaction K(+)(in) = K(+)(out). Its activity is regulated as follows. Inhibited by bee venom neurotoxin apamin. Inhibited by d-tubocurarine and tetraethylammonium (TEA). Small conductance calcium-activated potassium channel that mediates the voltage-independent transmembrane transfer of potassium across the cell membrane through a constitutive interaction with calmodulin which binds the intracellular calcium allowing its opening. The current is characterized by a voltage-independent activation, an intracellular calcium concentration increase-dependent activation and a single-channel conductance of about 3 picosiemens. Also presents an inwardly rectifying current, thus reducing its already small outward conductance of potassium ions, which is particularly the case when the membrane potential displays positive values, above + 20 mV. Activation is followed by membrane hyperpolarization. Thought to regulate neuronal excitability by contributing to the slow component of synaptic afterhyperpolarization. This is Small conductance calcium-activated potassium channel protein 1 from Homo sapiens (Human).